The following is a 235-amino-acid chain: Purine nucleoside phosphorylase DeoD-type (235 aa).

His4 lines the a purine D-ribonucleoside pocket. Residues Gly20, Arg24, Arg43, and 87–90 (RVGT) each bind phosphate. Residues Glu162, 179-181 (EME), and 203-204 (SD) each bind a purine D-ribonucleoside. Asp204 acts as the Proton donor in catalysis.

It belongs to the PNP/UDP phosphorylase family. In terms of assembly, homohexamer; trimer of homodimers.

The catalysed reaction is a purine D-ribonucleoside + phosphate = a purine nucleobase + alpha-D-ribose 1-phosphate. The enzyme catalyses a purine 2'-deoxy-D-ribonucleoside + phosphate = a purine nucleobase + 2-deoxy-alpha-D-ribose 1-phosphate. In terms of biological role, catalyzes the reversible phosphorolytic breakdown of the N-glycosidic bond in the beta-(deoxy)ribonucleoside molecules, with the formation of the corresponding free purine bases and pentose-1-phosphate. In Bacillus cytotoxicus (strain DSM 22905 / CIP 110041 / 391-98 / NVH 391-98), this protein is Purine nucleoside phosphorylase DeoD-type.